Here is an 86-residue protein sequence, read N- to C-terminus: Putative antitoxin VapB5 (86 aa).

The protein belongs to the phD/YefM antitoxin family. Forms a complex with VapC5.

In terms of biological role, probable antitoxin component of a probable type II toxin-antitoxin (TA) system. The cognate toxin is VapC5. The chain is Putative antitoxin VapB5 (vapB5) from Mycobacterium tuberculosis (strain CDC 1551 / Oshkosh).